Here is a 157-residue protein sequence, read N- to C-terminus: Beta-defensin 125 (157 aa).

The first 20 residues, 1–20 (MNILMLTFIICGLLTQVTKG), serve as a signal peptide directing secretion. 3 disulfide bridges follow: Cys-27–Cys-55, Cys-35–Cys-49, and Cys-39–Cys-56. Residues 109 to 157 (GETMTPETNTPETTMPPPETTTPETTMPPSETATSETMPPPSQRALTHN) form a disordered region. 2 stretches are compositionally biased toward low complexity: residues 110 to 121 (ETMTPETNTPET) and 129 to 145 (TTPE…TSET).

This sequence belongs to the beta-defensin family.

The protein resides in the secreted. In terms of biological role, has antibacterial activity. This is Beta-defensin 125 (DEFB125) from Pan troglodytes (Chimpanzee).